A 58-amino-acid chain; its full sequence is Preprotein translocase subunit SecG (58 aa).

Topologically, residues Met-1–Ser-33 are cytoplasmic. The chain crosses the membrane as a helical span at residues Pro-34–Leu-55. The Extracellular segment spans residues Pro-56–Leu-58.

This sequence belongs to the SEC61-beta family. Component of the protein translocase complex. Heterotrimer consisting of alpha (SecY), beta (SecG) and gamma (SecE) subunits. Can form oligomers of the heterotrimer.

It is found in the cell membrane. Its function is as follows. Involved in protein export. The function of the beta subunit is unknown, but it may be involved in stabilization of the trimeric complex. The protein is Preprotein translocase subunit SecG of Pyrobaculum arsenaticum (strain DSM 13514 / JCM 11321 / PZ6).